The following is a 136-amino-acid chain: Serine--glyoxylate aminotransferase (136 aa).

The protein belongs to the class-V pyridoxal-phosphate-dependent aminotransferase family. As to quaternary structure, homodimer. Pyridoxal 5'-phosphate serves as cofactor. In terms of tissue distribution, expressed in leaves but not in root tissue or seedlings.

The protein resides in the peroxisome. The enzyme catalyses glyoxylate + L-serine = 3-hydroxypyruvate + glycine. It catalyses the reaction glyoxylate + L-alanine = glycine + pyruvate. Inhibited by aminooxyacetate. The chain is Serine--glyoxylate aminotransferase from Zea mays (Maize).